The sequence spans 428 residues: Putative G-protein coupled receptor F59B2.13 (428 aa).

Over 1–30 (MSNNTTIPSKTATDICLTDRQMSLSVSSTE) the chain is Extracellular. 2 N-linked (GlcNAc...) asparagine glycosylation sites follow: Asn-3 and Asn-4. The helical transmembrane segment at 31–51 (GVLIGTIIPILVLFGISGNIL) threads the bilayer. The Cytoplasmic segment spans residues 52 to 67 (NLTVLLAPNLRTRSNQ). A helical transmembrane segment spans residues 68–88 (LLACLAVADIVSLVVILPHSM). At 89–110 (AHYETFETALWFRKFYGKYKFQ) the chain is on the extracellular side. The helical transmembrane segment at 111 to 131 (IIAMTNWSIATATWLVFVICL) threads the bilayer. Over 132-154 (ERLIIIKYPLSVRKQAKFFTPRN) the chain is Cytoplasmic. A helical transmembrane segment spans residues 155–175 (VVTIIVVTTFILTSYNHVSHA). Residues 176-222 (CAEKLFCNGTQYHVACLGIDSERWFRNEPNPNSEFMKSVVRVAPQVN) are Extracellular-facing. The N-linked (GlcNAc...) asparagine glycan is linked to Asn-183. A helical membrane pass occupies residues 223 to 243 (AIFVVLIPVVLVIIFNVMLIL). The Cytoplasmic portion of the chain corresponds to 244-278 (TLRQRTKLFEPSKTIRGDSQFTQLQSKTEHKVTIT). Residues 279–299 (VTAIVTCFTITQSPSAFVTFL) traverse the membrane as a helical segment. Residues 300–309 (SSYVHRDWVT) are Extracellular-facing. The chain crosses the membrane as a helical span at residues 310 to 330 (LSAICTILVVLGKALNFVLFC). Topologically, residues 331-428 (LSSASFRQRL…KEFRRGTSFV (98 aa)) are cytoplasmic.

This sequence belongs to the G-protein coupled receptor 1 family.

The protein resides in the cell membrane. In Caenorhabditis elegans, this protein is Putative G-protein coupled receptor F59B2.13.